The following is a 147-amino-acid chain: Bis(5'-nucleosyl)-tetraphosphatase [asymmetrical] (147 aa).

A2 bears the N-acetylalanine mark. One can recognise a Nudix hydrolase domain in the interval A2–H139. A Nudix box motif is present at residues G43–G64.

Belongs to the Nudix hydrolase family. It depends on a divalent metal cation as a cofactor.

It catalyses the reaction P(1),P(4)-bis(5'-guanosyl) tetraphosphate + H2O = GMP + GTP + 2 H(+). It carries out the reaction a 5'-end CoA-ribonucleoside in mRNA + H2O = a 5'-end phospho-adenosine-phospho-ribonucleoside in mRNA + (R)-4'-phosphopantetheine + 2 H(+). The enzyme catalyses a 5'-end FAD-phospho-ribonucleoside in mRNA + H2O = a 5'-end phospho-adenosine-phospho-ribonucleoside in mRNA + FMN + 2 H(+). Catalyzes the asymmetric hydrolysis of diadenosine 5',5'''-P1,P4-tetraphosphate (Ap4A) to yield AMP and ATP. Exhibits decapping activity towards FAD-capped RNAs and dpCoA-capped RNAs in vitro. The chain is Bis(5'-nucleosyl)-tetraphosphatase [asymmetrical] (Nudt2) from Mus musculus (Mouse).